The following is a 150-amino-acid chain: Large ribosomal subunit protein uL15 (150 aa).

Positions 1–52 (MITLNTLKDSTRKRKPRKRVGRGIGSKHGKTCGRGEKGAGARSGYKRRLGKE) are disordered. Positions 11-31 (TRKRKPRKRVGRGIGSKHGKT) are enriched in basic residues.

This sequence belongs to the universal ribosomal protein uL15 family. In terms of assembly, part of the 50S ribosomal subunit.

Its function is as follows. Binds to the 23S rRNA. This is Large ribosomal subunit protein uL15 from Protochlamydia amoebophila (strain UWE25).